The sequence spans 961 residues: Retinoblastoma-related protein 1 (961 aa).

Residues 404–606 (TPVSTAMTTA…EKGSSMYNSL (203 aa)) form a domain A region. The interval 404-819 (TPVSTAMTTA…NEMFIPSVKP (416 aa)) is pocket. The interval 607–728 (AVAKPSLAAE…PGGGGETCAE (122 aa)) is spacer. The segment at 729–819 (TAINVFFGKI…NEMFIPSVKP (91 aa)) is domain B. The interval 829–856 (NAEKNNHNDGQGPASPKPSPFPKLPDMS) is disordered.

Belongs to the retinoblastoma protein (RB) family.

The protein resides in the nucleus. In terms of biological role, regulator of biological processes that recruits a histone deacetylase to control gene transcription. May play a role in the entry into mitosis, negatively regulating the cell proliferation. Formation of stable complexes with geminiviridae replication-associated proteins may create a cellular environment which favors viral DNA replication. This is Retinoblastoma-related protein 1 (RB1) from Nicotiana tabacum (Common tobacco).